A 49-amino-acid chain; its full sequence is uncharacterized protein (49 aa).

This is an uncharacterized protein from Sinorhizobium fredii (strain NBRC 101917 / NGR234).